The sequence spans 317 residues: WSCD family member CG9164 (317 aa).

The helical transmembrane segment at 8–28 (FFGVSATIIIYIGGVLFLSMN) threads the bilayer. N-linked (GlcNAc...) asparagine glycosylation is found at Asn151, Asn227, and Asn233.

It belongs to the WSCD family.

Its subcellular location is the membrane. The sequence is that of WSCD family member CG9164 from Drosophila melanogaster (Fruit fly).